Reading from the N-terminus, the 118-residue chain is MPRVKGGTVTRQRRKKVIKLAKGYYGSKNTLFKVANQQVMKSLMYAFRDRRQKKRDFRKLWITRINAAARMNGLSYSRLMHGLKNAGIEVNRKMLADLAVHDEKAFAELATVAKNNIN.

It belongs to the bacterial ribosomal protein bL20 family.

Binds directly to 23S ribosomal RNA and is necessary for the in vitro assembly process of the 50S ribosomal subunit. It is not involved in the protein synthesizing functions of that subunit. The protein is Large ribosomal subunit protein bL20 of Bacillus anthracis (strain CDC 684 / NRRL 3495).